The chain runs to 196 residues: NADPH:quinone oxidoreductase (196 aa).

Belongs to the SsuE family. In terms of assembly, homotetramer. The cofactor is FMN.

It is found in the cell membrane. The enzyme catalyses a quinone + NADH + H(+) = a quinol + NAD(+). It catalyses the reaction a quinone + NADPH + H(+) = a quinol + NADP(+). The enzyme apparently serves as a quinone reductase in connection with conjugation reactions of hydroquinones involved in detoxification pathways. The polypeptide is NADPH:quinone oxidoreductase (NQR) (Arabidopsis thaliana (Mouse-ear cress)).